We begin with the raw amino-acid sequence, 617 residues long: uncharacterized protein (617 aa).

The helical transmembrane segment at 10–30 (AFFFFFVSLILLFLSPSYSDV) threads the bilayer. Residues 34–58 (ESDPIPYENSDASPGVVTSSESDRQ) are disordered. Residues 43-53 (SDASPGVVTSS) show a composition bias toward polar residues. Residues 60–86 (VSLHRLEELVRNLTELVARLDAKLSET) adopt a coiled-coil conformation. The chain crosses the membrane as a helical span at residues 473 to 493 (MLWSSPVFFFILFLFGAWHFF). A compositionally biased stretch (low complexity) spans 511 to 529 (STTMSSSSTTTAQNSSAFS). The interval 511–617 (STTMSSSSTT…GNNKALDDES (107 aa)) is disordered. Over residues 531 to 543 (STRRNDDHMDLRR) the composition is skewed to basic and acidic residues. Over residues 563-584 (VGSNDPSSRAPVETTNYRTTAQ) the composition is skewed to polar residues. Gly residues predominate over residues 590-599 (GGSGLDSGGF).

Its subcellular location is the membrane. This is an uncharacterized protein from Arabidopsis thaliana (Mouse-ear cress).